Reading from the N-terminus, the 211-residue chain is Protein-L-isoaspartate O-methyltransferase (211 aa).

Ser62 is an active-site residue.

Belongs to the methyltransferase superfamily. L-isoaspartyl/D-aspartyl protein methyltransferase family.

The protein resides in the cytoplasm. The enzyme catalyses [protein]-L-isoaspartate + S-adenosyl-L-methionine = [protein]-L-isoaspartate alpha-methyl ester + S-adenosyl-L-homocysteine. Catalyzes the methyl esterification of L-isoaspartyl residues in peptides and proteins that result from spontaneous decomposition of normal L-aspartyl and L-asparaginyl residues. It plays a role in the repair and/or degradation of damaged proteins. The sequence is that of Protein-L-isoaspartate O-methyltransferase from Shewanella denitrificans (strain OS217 / ATCC BAA-1090 / DSM 15013).